The following is a 352-amino-acid chain: Isoflavone-7-O-methyltransferase 8 (352 aa).

A substrate-binding site is contributed by 118 to 127 (VLDPTLSGSY). S-adenosyl-L-methionine is bound by residues Gly-196, Asp-219, Asp-239, Met-240, and Lys-253. The active-site Proton acceptor is the His-257.

Belongs to the class I-like SAM-binding methyltransferase superfamily. Cation-independent O-methyltransferase family. COMT subfamily. As to quaternary structure, homodimer.

It carries out the reaction a 7-hydroxyisoflavone + S-adenosyl-L-methionine = a 7-methoxyisoflavone + S-adenosyl-L-homocysteine + H(+). It participates in phytoalexin biosynthesis; medicarpin biosynthesis. Functionally, transfers a methyl group to 7-hydroxyls of the isoflavones daidzein, genistein and 6,7,4'-trihydroxyisoflavone. Can also methylate (+)6a-hydroxymaackiain with lower efficiency. This Medicago sativa (Alfalfa) protein is Isoflavone-7-O-methyltransferase 8.